We begin with the raw amino-acid sequence, 2968 residues long: Polyketide synthase 37 (2968 aa).

One can recognise a Ketosynthase family 3 (KS3) domain in the interval 32–454 (KEPIAIIGIG…GSNSSLFLSS (423 aa)). Active-site for beta-ketoacyl synthase activity residues include C198, H338, and H378. The segment at 624 to 950 (FIFSGQGQQW…LSTLSKNSNS (327 aa)) is malonyl-CoA:ACP transacylase (MAT) domain. S718 functions as the For malonyltransferase activity in the catalytic mechanism. The tract at residues 1017–1157 (PPMFISLDRK…GIIKYGTNYL (141 aa)) is N-terminal hotdog fold. The PKS/mFAS DH domain maps to 1017–1350 (PPMFISLDRK…FKGINSSSSS (334 aa)). The tract at residues 1031–1345 (TPSFEVRLNQ…LTNLEFKGIN (315 aa)) is dehydratase (DH) domain. H1049 serves as the catalytic Proton acceptor; for dehydratase activity. A C-terminal hotdog fold region spans residues 1183-1350 (FKSFNSNEFY…FKGINSSSSS (168 aa)). Catalysis depends on D1257, which acts as the Proton donor; for dehydratase activity. The tract at residues 1522–1547 (SCGGGGGSTNNTISNSSSSISSIDNG) is disordered. The segment covering 1530 to 1547 (TNNTISNSSSSISSIDNG) has biased composition (low complexity). Residues 1718-2053 (GIISDLKIKQ…SGNHIGKILI (336 aa)) are enoyl reductase (ER) domain. The segment at 2083–2277 (TYIFTGFGGL…LKSSCIHLAS (195 aa)) is ketoreductase (KR) domain. The segment at 2379-2400 (GDGSFDDLNQLEDEGQQGFGNG) is disordered. The region spanning 2421 to 2498 (FDNDFYTKSI…STVELIKNKL (78 aa)) is the Carrier domain. S2458 carries the post-translational modification O-(pantetheine 4'-phosphoryl)serine. The tract at residues 2568 to 2589 (SSSSNNSNSKNELTSPPPSAKR) is disordered. A chalcone synthase region spans residues 2707–2968 (ISHVVGVTST…IEAILFKLIK (262 aa)). C2747 is an active-site residue.

Pantetheine 4'-phosphate is required as a cofactor.

It catalyses the reaction (E)-4-coumaroyl-CoA + 3 malonyl-CoA + 3 H(+) = 2',4,4',6'-tetrahydroxychalcone + 3 CO2 + 4 CoA. It carries out the reaction hexanoyl-CoA + 3 malonyl-CoA + 3 H(+) = 2,4,6-trihydroxyphenylhexan-1-one + 3 CO2 + 4 CoA. Its pathway is secondary metabolite biosynthesis; flavonoid biosynthesis. Its function is as follows. Polyketide synthase; part of the gene cluster that mediates the biosynthesis of DIF-1 (Differentiation Inducing Factor-1), a signal molecule involved in the differentiation of pstO (prestalk-O) cells. The three-step process begins with the formation of (2,4,6-trihydroxyphenyl)-1-hexan-1-one (THPH) by the polyketide synthase StlB. THPH is then dichlorinated by the flavin-dependent halogenase ChlA. The last step of DIF-1 biosynthesis is the O-methylation of dichloro-THPH (or des-methyl-DIF-1) by the methyltransferase DmtA to yield DIF-1. The polypeptide is Polyketide synthase 37 (StlB) (Dictyostelium discoideum (Social amoeba)).